The following is a 327-amino-acid chain: Aquaporin-1 (327 aa).

Residues 1-34 (MSSNDSNDTDKQHTRLDPTGVDDAYIPPEQPETK) are disordered. The Cytoplasmic portion of the chain corresponds to 1-48 (MSSNDSNDTDKQHTRLDPTGVDDAYIPPEQPETKHHRFKISKDTLRNH). The helical transmembrane segment at 49–69 (FIAAAGEFCGTFMFLWCAYVI) threads the bilayer. Over 70-91 (CNVANHDVALVAAPDGSHPGQL) the chain is Extracellular. A helical transmembrane segment spans residues 92 to 112 (IMIAIGFGFSVMFSIWCFAGV). The Cytoplasmic portion of the chain corresponds to 113-136 (SGGALNPAVSLSLCLARAVSPTRC). Residues 118-120 (NPA) carry the NPA 1 motif. The helical transmembrane segment at 137–157 (VVMWVSQIVAGMAAGGAASAM) threads the bilayer. Residues 158 to 176 (TPGEVLFANSLGLGCSRTR) lie on the Extracellular side of the membrane. A helical transmembrane segment spans residues 177–197 (GLFLEMFGTAILCLTVLMTAV). The Cytoplasmic segment spans residues 198 to 203 (EKRETN). Residues 204-224 (FMAALPIGISLFIAHVALTAY) form a helical membrane-spanning segment. The Extracellular portion of the chain corresponds to 225 to 248 (TGTGVNPARSLGAAVAARYFPHYH). Residues 230–232 (NPA) carry the NPA 2 motif. Residues 249–269 (WIYWIGPLLGSILAWSVWQLL) form a helical membrane-spanning segment. The Cytoplasmic portion of the chain corresponds to 270-327 (QILDYTTYVTAEKAASTKEKAQKKVKPAVPLLWLKSNFSLLFFISRSLALNVIIFGKN).

Belongs to the MIP/aquaporin (TC 1.A.8) family.

The protein resides in the endoplasmic reticulum membrane. It localises to the cell membrane. Water channel required to facilitate the transport of water across membranes. Involved in sporulation, freeze tolerance and osmotolerance. Is non-functional in most laboratory strains. The sequence is that of Aquaporin-1 (AQY1) from Saccharomyces cerevisiae (strain Lalvin EC1118 / Prise de mousse) (Baker's yeast).